Here is a 320-residue protein sequence, read N- to C-terminus: Polyketide transferase FFUJ_12241 (320 aa).

Positions 58–298 (RDITCLAWDP…ILKGKGHLDW (241 aa)) are abhydrolase domain.

This sequence belongs to the polyketide transferase af380 family.

Its function is as follows. Polyketide transferase; part of the gene cluster that mediates the biosynthesis of fujikurins A-D, secondary metabolites playing a role during rice infection. The polyketide synthase PKS19 acts with the trans-enoyl reductase FFUJ_12240 and the polyketide transferase FFUJ_12241 to produce fujikurins, however, the biosynthesis pathway has not been identified yet. This chain is Polyketide transferase FFUJ_12241, found in Gibberella fujikuroi (strain CBS 195.34 / IMI 58289 / NRRL A-6831) (Bakanae and foot rot disease fungus).